The sequence spans 324 residues: Glucokinase (324 aa).

ATP is bound at residue isoleucine 6–threonine 11.

Belongs to the bacterial glucokinase family.

Its subcellular location is the cytoplasm. It carries out the reaction D-glucose + ATP = D-glucose 6-phosphate + ADP + H(+). The chain is Glucokinase from Zymomonas mobilis subsp. mobilis (strain ATCC 31821 / ZM4 / CP4).